The chain runs to 362 residues: DNA replication and repair protein RecF (362 aa).

30–37 (GDNGAGKT) provides a ligand contact to ATP.

It belongs to the RecF family.

It is found in the cytoplasm. Its function is as follows. The RecF protein is involved in DNA metabolism; it is required for DNA replication and normal SOS inducibility. RecF binds preferentially to single-stranded, linear DNA. It also seems to bind ATP. The chain is DNA replication and repair protein RecF from Xanthomonas oryzae pv. oryzae (strain MAFF 311018).